The sequence spans 498 residues: ATP synthase subunit beta, chloroplastic (498 aa).

ATP is bound at residue 172 to 179; sequence GGAGVGKT.

Belongs to the ATPase alpha/beta chains family. In terms of assembly, F-type ATPases have 2 components, CF(1) - the catalytic core - and CF(0) - the membrane proton channel. CF(1) has five subunits: alpha(3), beta(3), gamma(1), delta(1), epsilon(1). CF(0) has four main subunits: a(1), b(1), b'(1) and c(9-12).

It localises to the plastid. Its subcellular location is the chloroplast thylakoid membrane. It catalyses the reaction ATP + H2O + 4 H(+)(in) = ADP + phosphate + 5 H(+)(out). Its function is as follows. Produces ATP from ADP in the presence of a proton gradient across the membrane. The catalytic sites are hosted primarily by the beta subunits. The chain is ATP synthase subunit beta, chloroplastic from Calycanthus floridus (Eastern sweetshrub).